We begin with the raw amino-acid sequence, 312 residues long: tRNA dimethylallyltransferase (312 aa).

13–20 (GPTAVGKT) serves as a coordination point for ATP. Residue 15–20 (TAVGKT) coordinates substrate. Interaction with substrate tRNA stretches follow at residues 38–41 (DSVQ) and 163–167 (QRVVR).

This sequence belongs to the IPP transferase family. Monomer. Mg(2+) serves as cofactor.

The enzyme catalyses adenosine(37) in tRNA + dimethylallyl diphosphate = N(6)-dimethylallyladenosine(37) in tRNA + diphosphate. Its function is as follows. Catalyzes the transfer of a dimethylallyl group onto the adenine at position 37 in tRNAs that read codons beginning with uridine, leading to the formation of N6-(dimethylallyl)adenosine (i(6)A). In Exiguobacterium sibiricum (strain DSM 17290 / CCUG 55495 / CIP 109462 / JCM 13490 / 255-15), this protein is tRNA dimethylallyltransferase.